A 689-amino-acid chain; its full sequence is Glycine--tRNA ligase beta subunit (689 aa).

It belongs to the class-II aminoacyl-tRNA synthetase family. In terms of assembly, tetramer of two alpha and two beta subunits.

It is found in the cytoplasm. It carries out the reaction tRNA(Gly) + glycine + ATP = glycyl-tRNA(Gly) + AMP + diphosphate. The sequence is that of Glycine--tRNA ligase beta subunit from Coxiella burnetii (strain Dugway 5J108-111).